We begin with the raw amino-acid sequence, 191 residues long: Retinin (191 aa).

A signal peptide spans 1–21; sequence MSRLFLPVLAIVLVSIGASHT. Positions 52–88 are disordered; the sequence is LADGSSGSVSSSAAQPEDQSQEEAEEQQVSSASSGSA. 2 stretches are compositionally biased toward low complexity: residues 55–69 and 78–88; these read GSSGSVSSSAAQPED and QQVSSASSGSA.

In terms of processing, phosphorylated. In terms of tissue distribution, specifically expressed in cornea (at protein level). Detected in retina and cortex.

It localises to the secreted. In Drosophila melanogaster (Fruit fly), this protein is Retinin.